Consider the following 649-residue polypeptide: Protein PSK SIMULATOR 3 (649 aa).

Gly2 carries N-myristoyl glycine lipidation. The disordered stretch occupies residues 18-43; sequence SGSSVADDGREPDFGHSQPNGQTSLI.

It is found in the nucleus. Functionally, promotes plant growth, especially at the vegetative stage, probably via the regulation of phytosulfokine (PSK) signaling; PSK are peptide phytohormones acting as growth factors. Together with PSI2 and PSI3, required during vegetative growth and reproduction. May also have a function in carbohydrate metabolism. The polypeptide is Protein PSK SIMULATOR 3 (Arabidopsis thaliana (Mouse-ear cress)).